The primary structure comprises 335 residues: UPF0284 protein TK0853 (335 aa).

The protein belongs to the UPF0284 family.

This chain is UPF0284 protein TK0853, found in Thermococcus kodakarensis (strain ATCC BAA-918 / JCM 12380 / KOD1) (Pyrococcus kodakaraensis (strain KOD1)).